The primary structure comprises 437 residues: Enolase (437 aa).

Residue Q162 participates in (2R)-2-phosphoglycerate binding. The active-site Proton donor is E204. Mg(2+)-binding residues include D251, E297, and D324. (2R)-2-phosphoglycerate-binding residues include K349, R378, S379, and K400. K349 functions as the Proton acceptor in the catalytic mechanism.

The protein belongs to the enolase family. Requires Mg(2+) as cofactor.

The protein resides in the cytoplasm. The protein localises to the secreted. Its subcellular location is the cell surface. The enzyme catalyses (2R)-2-phosphoglycerate = phosphoenolpyruvate + H2O. The protein operates within carbohydrate degradation; glycolysis; pyruvate from D-glyceraldehyde 3-phosphate: step 4/5. In terms of biological role, catalyzes the reversible conversion of 2-phosphoglycerate (2-PG) into phosphoenolpyruvate (PEP). It is essential for the degradation of carbohydrates via glycolysis. The protein is Enolase of Prosthecochloris aestuarii (strain DSM 271 / SK 413).